We begin with the raw amino-acid sequence, 185 residues long: Ribosome-recycling factor (185 aa).

Belongs to the RRF family.

Its subcellular location is the cytoplasm. Functionally, responsible for the release of ribosomes from messenger RNA at the termination of protein biosynthesis. May increase the efficiency of translation by recycling ribosomes from one round of translation to another. The protein is Ribosome-recycling factor of Roseiflexus sp. (strain RS-1).